Reading from the N-terminus, the 240-residue chain is Ubiquinone biosynthesis O-methyltransferase (240 aa).

Residues Arg-44, Gly-64, Asp-85, and Met-129 each contribute to the S-adenosyl-L-methionine site.

The protein belongs to the methyltransferase superfamily. UbiG/COQ3 family.

The catalysed reaction is a 3-demethylubiquinol + S-adenosyl-L-methionine = a ubiquinol + S-adenosyl-L-homocysteine + H(+). It catalyses the reaction a 3-(all-trans-polyprenyl)benzene-1,2-diol + S-adenosyl-L-methionine = a 2-methoxy-6-(all-trans-polyprenyl)phenol + S-adenosyl-L-homocysteine + H(+). The protein operates within cofactor biosynthesis; ubiquinone biosynthesis. Its function is as follows. O-methyltransferase that catalyzes the 2 O-methylation steps in the ubiquinone biosynthetic pathway. The chain is Ubiquinone biosynthesis O-methyltransferase from Escherichia coli O6:H1 (strain CFT073 / ATCC 700928 / UPEC).